The chain runs to 462 residues: Amino-acid permease AapA (462 aa).

The next 12 membrane-spanning stretches (helical) occupy residues 27–47 (LMAI…KSIH), 48–68 (FAGP…FFIM), 96–116 (AAFI…MADL), 134–154 (LPGL…VKLF), 160–180 (WFAL…ILLI), 209–229 (GFIL…LVGL), 252–272 (ILLF…WNVL), 279–299 (FVQV…NFVV), 343–363 (ALFF…LMPE), 366–386 (FTLI…ITVI), 410–430 (PLSN…LALA), and 435–455 (IALF…KVQT).

It belongs to the amino acid-polyamine-organocation (APC) superfamily.

It localises to the cell membrane. Its function is as follows. Probable amino-acid or metabolite transport protein. In Bacillus subtilis (strain 168), this protein is Amino-acid permease AapA (aapA).